The following is a 289-amino-acid chain: 18S rRNA (guanine-N(7))-methyltransferase RID2 (289 aa).

The segment at 215–289 (KNEYDESCSE…FTSRKRRTRF (75 aa)) is disordered. The span at 219 to 237 (DESCSEDDNSDDEESEEVG) shows a compositional bias: acidic residues. Positions 243 to 254 (RPRKRQRTNTKV) are enriched in basic residues. Residues 255 to 264 (KGREWVLRKK) are compositionally biased toward basic and acidic residues. The short motif at 268–275 (RRKGKNVP) is the Nuclear localization signal element.

The protein belongs to the class I-like SAM-binding methyltransferase superfamily. BUD23/WBSCR22 family. In terms of tissue distribution, expressed in seedlings, roots and flowers.

The protein localises to the nucleus. It localises to the nucleoplasm. Its subcellular location is the cytoplasm. It is found in the perinuclear region. The protein resides in the nucleolus. The catalysed reaction is guanosine(1575) in yeast 18S rRNA + S-adenosyl-L-methionine = N(7)-methylguanosine(1575) in yeast 18S rRNA + S-adenosyl-L-homocysteine. Functionally, essential protein. S-adenosyl-L-methionine-dependent methyltransferase that specifically methylates the N(7) position of a guanine in 18S rRNA. Requires the methyltransferase adapter protein TRM112 for full rRNA methyltransferase activity. Important for biogenesis end export of the 40S ribosomal subunit independent on its methyltransferase activity. Involved in the pre-rRNA processing steps in the nucleolus leading to small-subunit rRNA production independently of its RNA-modifying catalytic activity. Supports cell proliferation. Required for the initiation of lateral root primordia formation and for the root apical meristem (RAM) organization as well as for leaves development. During callus formation from hypocotyl and root explants, required for the initial stage of reactivation of cell proliferation in the hypocotyl stele. Involved in leaf polarity establishment by functioning cooperatively with AS2 to repress abaxial genes ARF3, ARF4, KAN1, KAN2, YAB1 and YAB5, and the knox homeobox genes KNAT1, KNAT2, KNAT6, and STM to promote adaxial development in leaf primordia at shoot apical meristems at high temperatures. This Arabidopsis thaliana (Mouse-ear cress) protein is 18S rRNA (guanine-N(7))-methyltransferase RID2.